The following is a 375-amino-acid chain: Putative F-box protein At1g12190 (375 aa).

Residues 1-46 enclose the F-box domain; it reads MACVKFPWELMEEILYRVPSLSLSRFKTVSKEWNTLLNDKTFIKKH.

The polypeptide is Putative F-box protein At1g12190 (Arabidopsis thaliana (Mouse-ear cress)).